The chain runs to 125 residues: Class III hydrophobin G (125 aa).

A signal peptide spans M1–A20. Disulfide bonds link C54–C107, C60–C101, C61–C94, and C108–C122.

This sequence belongs to the fungal hydrophobin family. Self-assembles to form functional amyloid fibrils called rodlets. Self-assembly into fibrillar rodlets occurs spontaneously at hydrophobic:hydrophilic interfaces and the rodlets further associate laterally to form amphipathic monolayers.

Its subcellular location is the secreted. The protein resides in the cell wall. Aerial growth, conidiation, and dispersal of filamentous fungi in the environment rely upon a capability of their secreting small amphipathic proteins called hydrophobins (HPBs) with low sequence identity. Class I can self-assemble into an outermost layer of rodlet bundles on aerial cell surfaces, conferring cellular hydrophobicity that supports fungal growth, development and dispersal; whereas Class II form highly ordered films at water-air interfaces through intermolecular interactions but contribute nothing to the rodlet structure. RodF and rodG belong to Class III, which contains hydrophobins with intermediate (between classes I and II) or atypical characteristics. RodG, unlike rodA, is not required for rodlet formation. The protein is Class III hydrophobin G of Aspergillus fumigatus (strain ATCC MYA-4609 / CBS 101355 / FGSC A1100 / Af293) (Neosartorya fumigata).